The chain runs to 487 residues: Betaine aldehyde dehydrogenase (487 aa).

Ile-27 and Asp-93 together coordinate K(+). Residue 149–151 (GAW) participates in NAD(+) binding. Lys-161 acts as the Charge relay system in catalysis. NAD(+)-binding positions include 175–178 (KPSE) and 228–231 (SVPT). Position 243 (Leu-243) interacts with K(+). Glu-249 functions as the Proton acceptor in the catalytic mechanism. NAD(+) is bound by residues Gly-251, Cys-283, and Glu-384. The active-site Nucleophile is Cys-283. Cys-283 carries the cysteine sulfenic acid (-SOH) modification. Positions 454 and 457 each coordinate K(+). Residue Glu-461 is the Charge relay system of the active site.

This sequence belongs to the aldehyde dehydrogenase family. In terms of assembly, dimer of dimers. Requires K(+) as cofactor.

The enzyme catalyses betaine aldehyde + NAD(+) + H2O = glycine betaine + NADH + 2 H(+). It participates in amine and polyamine biosynthesis; betaine biosynthesis via choline pathway; betaine from betaine aldehyde: step 1/1. Functionally, involved in the biosynthesis of the osmoprotectant glycine betaine. Catalyzes the irreversible oxidation of betaine aldehyde to the corresponding acid. The sequence is that of Betaine aldehyde dehydrogenase from Brucella melitensis biotype 2 (strain ATCC 23457).